The primary structure comprises 81 residues: MAHKKGQGSSRNGRDSNAQRRGVKKFGGEAVIAGNILVRQVGTKFHPGAGVGMGNDYTLFALVDGKVRFDREGRRVNIDVA.

Residues 1–22 (MAHKKGQGSSRNGRDSNAQRRG) are disordered.

Belongs to the bacterial ribosomal protein bL27 family.

This is Large ribosomal subunit protein bL27 from Rhodopirellula baltica (strain DSM 10527 / NCIMB 13988 / SH1).